A 399-amino-acid chain; its full sequence is Fluconazole resistance protein 3 (399 aa).

Disordered regions lie at residues 1-21 and 103-197; these read MNFKTENSTTPNGDWSQSKAF and HPYI…EKDA. Residues 103-145 are compositionally biased toward polar residues; the sequence is HPYITNTNNHLSYSNSSEEFSPIGNNMSPDSTGGANSNNFTSG. Residues 167–184 are compositionally biased toward low complexity; the sequence is SGNNNNNNGTSRSSQSSS. The 64-residue stretch at 210–273 folds into the bZIP domain; the sequence is EELQMKRKAQ…ISIATENEIL (64 aa). The tract at residues 215-234 is basic motif; that stretch reads KRKAQNRAAQRAFRERKESK. The interval 235-242 is leucine-zipper; sequence LKELEAKL.

It belongs to the bZIP family.

The protein resides in the nucleus. Its function is as follows. Transcription factor that confers fluconazole resistance in S.cerevisiae by activation of the PDR5 gene. Can also activate the transcription of S.cerevisiae genes involved in 4-nitroquinoline-N-oxide resistance. The polypeptide is Fluconazole resistance protein 3 (FCR3) (Candida albicans (Yeast)).